Reading from the N-terminus, the 162-residue chain is Probable cytosine deaminase (162 aa).

Residues 8-132 (EKDLAYLREA…PLYINSRDIL (125 aa)) enclose the CMP/dCMP-type deaminase domain. Zn(2+) is bound at residue His-59. The Proton donor role is filled by Glu-61. Residues Cys-87 and Cys-90 each contribute to the Zn(2+) site. Asp-159 lines the substrate pocket.

It belongs to the cytidine and deoxycytidylate deaminase family. Homodimer. Requires Zn(2+) as cofactor.

It localises to the cytoplasm. The protein localises to the nucleus. It catalyses the reaction cytosine + H2O + H(+) = uracil + NH4(+). The protein operates within pyrimidine metabolism; UMP biosynthesis via salvage pathway; uracil from cytosine: step 1/1. Its function is as follows. Catalyzes the hydrolytic deamination of cytosine to uracil or 5-methylcytosine to thymine. Is involved in the pyrimidine salvage pathway, which allows the cell to utilize cytosine for pyrimidine nucleotide synthesis. This is Probable cytosine deaminase from Schizosaccharomyces pombe (strain 972 / ATCC 24843) (Fission yeast).